The chain runs to 645 residues: Sentrin-specific protease 1 (645 aa).

Residues 1–200 (MDDIADRMRM…REIYRQLLQM (200 aa)) form an interaction with CCAR2 region. Ser-57, Ser-117, and Ser-157 each carry phosphoserine. Residues 92–117 (QSANGQWRNSTPSSSSSLQKSRNSRS) are disordered. A compositionally biased stretch (low complexity) spans 99-117 (RNSTPSSSSSLQKSRNSRS). The Nuclear localization signal motif lies at 171–177 (PKKTQRR). A disordered region spans residues 285–313 (KDSGTLHHPHHHHSVPHQPDNLAASNTQS). Protease regions lie at residues 451-614 (LTIT…YADC) and 451-615 (LTIT…ADCI). Catalysis depends on residues His-534 and Asp-551. Residues 575-578 (KKRK) carry the Nuclear localization signal motif. Catalysis depends on Cys-604, which acts as the Nucleophile. The Nuclear localization signal signature appears at 629-635 (PYFRKRM). Positions 636-645 (VWEILHRKLL) match the Nuclear export signal motif.

The protein belongs to the peptidase C48 family. Interacts with RBM33; promoting ALKBH5 desumoylation and subsequent activation.

It is found in the nucleus. Its subcellular location is the cytoplasm. Functionally, protease that catalyzes two essential functions in the SUMO pathway. The first is the hydrolysis of an alpha-linked peptide bond at the C-terminal end of the small ubiquitin-like modifier (SUMO) propeptides, SUMO1, SUMO2 and SUMO3 leading to the mature form of the proteins. The second is the deconjugation of SUMO1, SUMO2 and SUMO3 from targeted proteins, by cleaving an epsilon-linked peptide bond between the C-terminal glycine of the mature SUMO and the lysine epsilon-amino group of the target protein. Deconjugates SUMO1 from HIPK2. Deconjugates SUMO1 from HDAC1 and BHLHE40/DEC1, which decreases its transcriptional repression activity. Deconjugates SUMO1 from CLOCK, which decreases its transcriptional activation activity. Deconjugates SUMO2 from MTA1. Inhibits N(6)-methyladenosine (m6A) RNA methylation by mediating SUMO1 deconjugation from METTL3 and ALKBH5: METTL3 inhibits the m6A RNA methyltransferase activity, while ALKBH5 desumoylation promotes m6A demethylation. Desumoylates CCAR2 which decreases its interaction with SIRT1. Deconjugates SUMO1 from GPS2. The chain is Sentrin-specific protease 1 (SENP1) from Pongo abelii (Sumatran orangutan).